Here is a 569-residue protein sequence, read N- to C-terminus: Protein AF-9 (569 aa).

One can recognise a YEATS domain in the interval 1–138 (MASSCAVQVK…EDFRRKLLKA (138 aa)). The disordered stretch occupies residues 138–476 (AGGDPNRSIH…PPPPLLKTNN (339 aa)). Residues 149-190 (SSSSSSSSSSSSSSSSSSSSSSSSSSSSSSSSSSSSSSSSSS) show a composition bias toward low complexity. Positions 202-265 (EHKEKPSKDS…PKPMSKEPKA (64 aa)) are enriched in basic and acidic residues. Serine 289 and serine 295 each carry phosphoserine. The short motif at 296 to 301 (AKKRKK) is the Nuclear localization signal element. Positions 304 to 314 (SEALFKSFSSA) are enriched in low complexity. A compositionally biased stretch (basic and acidic residues) spans 323–350 (ADKKQIKDKSHVKMGKVKIESETSEKKK). Residue lysine 340 forms a Glycyl lysine isopeptide (Lys-Gly) (interchain with G-Cter in SUMO2) linkage. The segment covering 358-369 (DIVDPNDSDVEE) has biased composition (acidic residues). Residues 372–396 (SSKSDSEQPSPASSSSSSSSSFTPS) are compositionally biased toward low complexity. Phosphoserine occurs at positions 413 and 420. The span at 415–430 (DNEEESDEAEDNDNDS) shows a compositional bias: acidic residues. Residues 446–462 (VSLSDGSDSESSSASSP) are compositionally biased toward low complexity. The residue at position 484 (serine 484) is a Phosphoserine.

As to quaternary structure, component of the super elongation complex (SEC), at least composed of EAF1, EAF2, CDK9, MLLT3/AF9, AFF (AFF1 or AFF4), the P-TEFb complex and ELL (ELL, ELL2 or ELL3). Interacts with BCOR. Interacts with CBX8. Interacts with ALKBH4. Ubiquitously expressed. Strong expression in the spleen.

The protein resides in the nucleus. It localises to the chromosome. In terms of biological role, chromatin reader component of the super elongation complex (SEC), a complex required to increase the catalytic rate of RNA polymerase II transcription by suppressing transient pausing by the polymerase at multiple sites along the DNA. Specifically recognizes and binds acylated histone H3, with a preference for histone H3 that is crotonylated. Crotonylation marks active promoters and enhancers and confers resistance to transcriptional repressors. Recognizes and binds histone H3 crotonylated at 'Lys-9' (H3K9cr), and with slightly lower affinity histone H3 crotonylated at 'Lys-18' (H3K18cr). Also recognizes and binds histone H3 acetylated and butyrylated at 'Lys-9' (H3K9ac and H3K9bu, respectively), but with lower affinity than crotonylated histone H3. In the SEC complex, MLLT3 is required to recruit the complex to crotonylated histones. Recruitment of the SEC complex to crotonylated histones promotes recruitment of DOT1L on active chromatin to deposit histone H3 'Lys-79' methylation (H3K79me). Plays a key role in hematopoietic stem cell (HSC) maintenance by preserving, rather than conferring, HSC stemness. Acts by binding to the transcription start site of active genes in HSCs and sustaining level of H3K79me2, probably by recruiting DOT1L. The chain is Protein AF-9 (Mllt3) from Mus musculus (Mouse).